A 189-amino-acid polypeptide reads, in one-letter code: dCTP deaminase (189 aa).

Residues 112–117 (KSTYAR), 136–138 (TLE), Gln157, Tyr171, and Gln181 contribute to the dCTP site. Residue Glu138 is the Proton donor/acceptor of the active site.

The protein belongs to the dCTP deaminase family. In terms of assembly, homotrimer.

The enzyme catalyses dCTP + H2O + H(+) = dUTP + NH4(+). It participates in pyrimidine metabolism; dUMP biosynthesis; dUMP from dCTP (dUTP route): step 1/2. Catalyzes the deamination of dCTP to dUTP. The protein is dCTP deaminase of Burkholderia thailandensis (strain ATCC 700388 / DSM 13276 / CCUG 48851 / CIP 106301 / E264).